A 555-amino-acid polypeptide reads, in one-letter code: Bifunctional epoxide hydrolase 2 (555 aa).

Residues 1 to 224 (MTLRAAVFDL…KVTGIQLLNT (224 aa)) are phosphatase. Mg(2+)-binding residues include aspartate 9 and aspartate 11. The residue at position 43 (lysine 43) is an N6-acetyllysine. Lysine 55 bears the N6-succinyllysine mark. 123 to 124 (TN) contacts phosphate. Position 185 (aspartate 185) interacts with Mg(2+). Residues lysine 191 and lysine 215 each carry the N6-acetyllysine modification. The segment at 235-555 (SDMSHGYVTV…ARNPPVVSKM (321 aa)) is epoxide hydrolase. In terms of domain architecture, AB hydrolase-1 spans 259–531 (PAVCLCHGFP…CGHWTQMDKP (273 aa)). The Nucleophile role is filled by aspartate 335. Serine 370 carries the phosphoserine modification. Position 383 (tyrosine 383) interacts with substrate. An N6-succinyllysine mark is found at lysine 421 and lysine 455. Tyrosine 466 serves as the catalytic Proton donor. Cysteine 522 is lipidated: S-(15-deoxy-Delta12,14-prostaglandin J2-9-yl)cysteine. Residue histidine 524 is the Proton acceptor of the active site. Residues 553-555 (SKM) carry the Microbody targeting signal motif. Position 554 is an N6-succinyllysine (lysine 554).

Belongs to the AB hydrolase superfamily. Epoxide hydrolase family. In terms of assembly, homodimer. Mg(2+) serves as cofactor. The N-terminus is blocked. Post-translationally, the covalent modification of cysteine by 15-deoxy-Delta12,14-prostaglandin-J2 is autocatalytic and reversible. It may occur as an alternative to other cysteine modifications, such as S-nitrosylation and S-palmitoylation.

It localises to the cytoplasm. The protein resides in the peroxisome. It catalyses the reaction an epoxide + H2O = an ethanediol. The catalysed reaction is (9S,10S)-10-hydroxy-9-(phosphooxy)octadecanoate + H2O = (9S,10S)-9,10-dihydroxyoctadecanoate + phosphate. It carries out the reaction 12-phosphooxy-(9Z)-octadecenoate + H2O = 12-hydroxy-(9Z)-octadecenoate + phosphate. The enzyme catalyses 12-phosphooxy-(9E)-octadecenoate + H2O = 12-hydroxy-(9E)-octadecenoate + phosphate. It catalyses the reaction 12-(phosphooxy)octadecanoate + H2O = 12-hydroxyoctadecanoate + phosphate. The catalysed reaction is 8,9-epoxy-(5Z,11Z,14Z)-eicosatrienoate + H2O = 8,9-dihydroxy-(5Z,11Z,14Z)-eicosatrienoate. It carries out the reaction 11,12-epoxy-(5Z,8Z,14Z)-eicosatrienoate + H2O = 11,12-dihydroxy-(5Z,8Z,14Z)-eicosatrienoate. The enzyme catalyses 14,15-epoxy-(5Z,8Z,11Z)-eicosatrienoate + H2O = 14,15-dihydroxy-(5Z,8Z,11Z)-eicosatrienoate. It catalyses the reaction 9,10-epoxy-(12Z)-octadecenoate + H2O = 9,10-dihydroxy-(12Z)-octadecenoate. The catalysed reaction is 8-hydroxy-(11S,12S)-epoxy-(5Z,9E,14Z)-eicosatrienoate + H2O = (8,11R,12S)-trihydroxy-(5Z,9E,14Z)-eicosatrienoate. It carries out the reaction 10-hydroxy-(11S,12S)-epoxy- (5Z,8Z,14Z)-eicosatrienoate + H2O = (10,11S,12R)-trihydroxy-(5Z,8Z,14Z)-eicosatrienoate. The enzyme catalyses 1-tetradecanoyl-sn-glycerol 3-phosphate + H2O = 1-tetradecanoyl-sn-glycerol + phosphate. It catalyses the reaction 1-octadecanoyl-sn-glycero-3-phosphate + H2O = 1-octadecanoyl-sn-glycerol + phosphate. The catalysed reaction is 1-(5Z,8Z,11Z,14Z-eicosatetraenoyl)-sn-glycero-3-phosphate + H2O = 1-(5Z,8Z,11Z,14Z-eicosatetraenoyl)-sn-glycerol + phosphate. It carries out the reaction 1-hexadecanoyl-sn-glycero-3-phosphate + H2O = 1-hexadecanoyl-sn-glycerol + phosphate. The enzyme catalyses 1-(9Z-octadecenoyl)-sn-glycero-3-phosphate + H2O = 1-(9Z-octadecenoyl)-sn-glycerol + phosphate. It catalyses the reaction (8S,9R)-epoxy-(5Z,11Z,14Z)-eicosatrienoate + H2O = (8S,9S)-dihydroxy-(5Z,11Z,14Z)-eicosatrienoate. The catalysed reaction is (11S,12R)-epoxy-(5Z,8Z,14Z)-eicosatrienoate + H2O = (11R,12R)-dihydroxy-(5Z,8Z,14Z)-eicosatrienoate. It carries out the reaction (11S,12R)-epoxy-(5Z,8Z,14Z)-eicosatrienoate + H2O = (11S,12S)-dihydroxy-(5Z,8Z,14Z)-eicosatrienoate. The enzyme catalyses (14S,15R)-epoxy-(5Z,8Z,11Z)-eicosatrienoate + H2O = (14R,15R)-dihydroxy-(5Z,8Z,11Z)-eicosatrienoate. It catalyses the reaction (14S,15R)-epoxy-(5Z,8Z,11Z)-eicosatrienoate + H2O = (14S,15S)-dihydroxy-(5Z,8Z,11Z)-eicosatrienoate. The catalysed reaction is (11R,12S)-epoxy-(5Z,8Z,14Z)-eicosatrienoate + H2O = (11S,12S)-dihydroxy-(5Z,8Z,14Z)-eicosatrienoate. It carries out the reaction (11R,12S)-epoxy-(5Z,8Z,14Z)-eicosatrienoate + H2O = (11R,12R)-dihydroxy-(5Z,8Z,14Z)-eicosatrienoate. The enzyme catalyses (8S,9R)-epoxy-(5Z,11Z,14Z)-eicosatrienoate + H2O = (8R,9R)-dihydroxy-(5Z,11Z,14Z)-eicosatrienoate. It catalyses the reaction (14R,15S)-epoxy-(5Z,8Z,11Z)-eicosatrienoate + H2O = (14R,15R)-dihydroxy-(5Z,8Z,11Z)-eicosatrienoate. Inhibited by 1-(1-acetylpiperidin-4-yl)-3-(4-(trifl uoromethoxy)phenyl)urea (TPAU), 1-cyclohexyl-3-dodecylurea (CDU), 12-(3-adamantan-1-yl-ureido)-dodecanoic acid (AUDA), 1-((3S, 5S, 7S)-adamantan-1-yl)-3-(5-(2-(2-ethoxyethoxy) ethoxy)pentyl)urea (AEPU), N-adamantyl-N[']-cyclohexyl urea (ACU), 4-(((1S, 4S)-4-(3-((3S, 5S, 7S)-adamantan-1-yl) ureido)cyclohexyl)oxy)benzoic acid (c-AUCB), 4-(((1R, 4R)-4-(3-((3S, 5S, 7S)-adamantan-1-yl)ureido)cyclohexyl)oxy)benzoic acid (t-AUCB), 4-(((1R, 4R)-4-(3-(4(trifluoromethoxy)phenyl)ureido)cyclohexyl)oxy)benzoic acid (t-TAUCB) and to a lesser extent by 8-(3-((3S, 5S, 7S)-adamantan-1-yl)ureido) octanoic acid (AUOA). Phosphatase activity is inhibited by dodecyl-phosphate, phospholipids such as phospho-lysophosphatidic acids and fatty acids such as palmitic acid and lauric acid. Its function is as follows. Bifunctional enzyme. The C-terminal domain has epoxide hydrolase activity and acts on epoxides (alkene oxides, oxiranes) and arene oxides. Plays a role in xenobiotic metabolism by degrading potentially toxic epoxides. Also determines steady-state levels of physiological mediators. Bifunctional enzyme. The N-terminal domain has lipid phosphatase activity, with the highest activity towards threo-9,10-phosphonooxy-hydroxy-octadecanoic acid, followed by erythro-9,10-phosphonooxy-hydroxy-octadecanoic acid, 12-phosphonooxy-octadec-9Z-enoic acid and 12-phosphonooxy-octadec-9E-enoic acid. Has phosphatase activity toward lyso-glycerophospholipids with also some lower activity toward lysolipids of sphingolipid and isoprenoid phosphates. The sequence is that of Bifunctional epoxide hydrolase 2 from Homo sapiens (Human).